The chain runs to 340 residues: Protein RecA (340 aa).

Residue 66 to 73 participates in ATP binding; sequence GPESSGKT.

Belongs to the RecA family.

The protein resides in the cytoplasm. Functionally, can catalyze the hydrolysis of ATP in the presence of single-stranded DNA, the ATP-dependent uptake of single-stranded DNA by duplex DNA, and the ATP-dependent hybridization of homologous single-stranded DNAs. It interacts with LexA causing its activation and leading to its autocatalytic cleavage. In Rickettsia prowazekii (strain Madrid E), this protein is Protein RecA.